Here is an 808-residue protein sequence, read N- to C-terminus: uncharacterized protein (808 aa).

In terms of domain architecture, EF-hand 1 spans 6-41 (SRSEKVKRIFQQFDGNHDGGLNREEMAALVVAVNPR). TPR repeat units follow at residues 234–267 (FDGH…QPTD), 269–301 (RPHF…AESG), 310–343 (PQIY…CPTH), 344–377 (FRAL…KPDY), 378–411 (ADAH…KPGH), 412–445 (VDAL…WPNH), and 447–479 (RAQL…TNRV). Residues 600–635 (AIKAINEKILALLDDSGSGRVDMGMFYAVIAPLCGG) form the EF-hand 2 domain. The stretch at 773–794 (FKQEEYKFREYESEAEAMKAKC) forms a coiled coil.

This is an uncharacterized protein from Arabidopsis thaliana (Mouse-ear cress).